The sequence spans 230 residues: 2,3-bisphosphoglycerate-dependent phosphoglycerate mutase 1 (230 aa).

Residues 8–15, 21–22, Arg-60, 87–90, Lys-98, 114–115, and 183–184 each bind substrate; these read RHGQSEWN, TG, ERHY, RR, and GN. The active-site Tele-phosphohistidine intermediate is the His-9. Glu-87 acts as the Proton donor/acceptor in catalysis.

The protein belongs to the phosphoglycerate mutase family. BPG-dependent PGAM subfamily.

The catalysed reaction is (2R)-2-phosphoglycerate = (2R)-3-phosphoglycerate. It participates in carbohydrate degradation; glycolysis; pyruvate from D-glyceraldehyde 3-phosphate: step 3/5. Its function is as follows. Catalyzes the interconversion of 2-phosphoglycerate and 3-phosphoglycerate. The protein is 2,3-bisphosphoglycerate-dependent phosphoglycerate mutase 1 of Lactobacillus johnsonii (strain CNCM I-12250 / La1 / NCC 533).